Reading from the N-terminus, the 874-residue chain is Alanine--tRNA ligase (874 aa).

Zn(2+) contacts are provided by H562, H566, C664, and H668.

This sequence belongs to the class-II aminoacyl-tRNA synthetase family. It depends on Zn(2+) as a cofactor.

The protein localises to the cytoplasm. It carries out the reaction tRNA(Ala) + L-alanine + ATP = L-alanyl-tRNA(Ala) + AMP + diphosphate. Catalyzes the attachment of alanine to tRNA(Ala) in a two-step reaction: alanine is first activated by ATP to form Ala-AMP and then transferred to the acceptor end of tRNA(Ala). Also edits incorrectly charged Ser-tRNA(Ala) and Gly-tRNA(Ala) via its editing domain. This is Alanine--tRNA ligase from Shewanella loihica (strain ATCC BAA-1088 / PV-4).